The chain runs to 24 residues: Glutamate dehydrogenase (24 aa).

It belongs to the Glu/Leu/Phe/Val dehydrogenases family. Homohexamer.

The protein resides in the cytoplasm. It carries out the reaction L-glutamate + NAD(+) + H2O = 2-oxoglutarate + NH4(+) + NADH + H(+). The enzyme catalyses L-glutamate + NADP(+) + H2O = 2-oxoglutarate + NH4(+) + NADPH + H(+). In Pyrococcus woesei, this protein is Glutamate dehydrogenase (gdhA).